A 386-amino-acid polypeptide reads, in one-letter code: Alkanesulfonate monooxygenase (386 aa).

The protein belongs to the SsuD family.

It catalyses the reaction an alkanesulfonate + FMNH2 + O2 = an aldehyde + FMN + sulfite + H2O + 2 H(+). Its function is as follows. Catalyzes the desulfonation of aliphatic sulfonates. This chain is Alkanesulfonate monooxygenase, found in Delftia acidovorans (strain DSM 14801 / SPH-1).